Consider the following 7763-residue polypeptide: Nonribosomal peptide synthetase agiA (7763 aa).

The condensation 1 stretch occupies residues 20-168; it reads APSVMQEEMI…DGWSARALLE (149 aa). Residues 469-866 are adenylation 1; that stretch reads EQAASKWPSK…GRADGQIKLR (398 aa). The 77-residue stretch at 995–1071 folds into the Carrier 1 domain; the sequence is LPESPAERLL…DVARAMSPSS (77 aa). An O-(pantetheine 4'-phosphoryl)serine modification is found at S1032. The segment at 1104 to 1526 is condensation 2; that stretch reads IYPCTPQQEG…GLSDQKLITG (423 aa). The interval 1562-1968 is adenylation 2; the sequence is FEMQADMTPQ…GRIDSQIKLR (407 aa). A Carrier 2 domain is found at 2090-2166; sequence WEQGSIEDKI…SQAKCATSHT (77 aa). S2127 carries the O-(pantetheine 4'-phosphoryl)serine modification. An epimerase (E) region spans residues 2212–2556; that stretch reads DHFNQSVLLD…IMPLVFNYQG (345 aa). The interval 2676–3016 is condensation 3; that stretch reads DIIPCTPMQR…PALVNTLLNF (341 aa). The adenylation 3 stretch occupies residues 3136 to 3531; it reads WAAQVPEKVA…GRMDDQIKIR (396 aa). A Carrier 3 domain is found at 3667-3743; it reads GPESPTEIML…ELATILNTSY (77 aa). S3704 is subject to O-(pantetheine 4'-phosphoryl)serine. A condensation 4 region spans residues 3789-4238; that stretch reads VMPCTPFQEG…ISQSIDALVQ (450 aa). An adenylation 4 region spans residues 4321–4687; it reads VGSQQPIIPI…GRFDRQIKIR (367 aa). A Carrier 4 domain is found at 4806–4880; it reads APTTEREKVI…DLARQLESTA (75 aa). S4840 is modified (O-(pantetheine 4'-phosphoryl)serine). Residues 4902–5339 form a condensation 5 region; that stretch reads SFAQGRLWFL…ALLNDLSMHD (438 aa). Residues 5361–5765 form an adenylation 5 region; the sequence is FRQEARSHPD…GRRDDQVKIR (405 aa). Residues 5820 to 5975 are S-adenosyl-L-methionine-dependent N-methyltransferase; the sequence is DAWKNVFDTE…YLSEIVQKLV (156 aa). Residues 6306 to 6381 enclose the Carrier 5 domain; it reads EYGSEMERIL…RLADRLLSKQ (76 aa). Residue S6341 is modified to O-(pantetheine 4'-phosphoryl)serine. The interval 6378–6399 is disordered; the sequence is LSKQSDSNTEANTSTDGKTQHS. A compositionally biased stretch (polar residues) spans 6379-6399; that stretch reads SKQSDSNTEANTSTDGKTQHS. The tract at residues 6424–6883 is condensation 6; it reads MPCTPFQEGV…TVGDAEEAAL (460 aa). Positions 6913 to 7327 are adenylation 6; sequence RQAMESPCKI…GRMDSQVKLR (415 aa). One can recognise a Carrier 6 domain in the interval 7446-7522; the sequence is PSPGTLEATL…SQAFRILCDV (77 aa). S7483 carries the O-(pantetheine 4'-phosphoryl)serine modification. The segment at 7542–7638 is thioesterase (TE); the sequence is TMVLIHPFFG…TGKGSPFSTV (97 aa).

The protein belongs to the NRP synthetase family.

Functionally, nonribosomal peptide synthetase; part of the gene cluster that mediates the biosynthesis of the aspergillicins A and F, 2 cryptic cyclic hexa-depsipeptides. The hexamodular NRPS agiA catalyzes the condensation of the six amino acid residues including N-Me-L-O-Me-tyrosine, L-proline 1, L-proline 2, D-isoleucine, O-acetyl-threonine, and L-isoleucine. The starting condensation domain (C1) of agiA probably loads acetyl-CoA which is condensed on the N-terminus of threonine by the first module to yield O-acetyl-threonine. The second module then loads L-isoleucine. The epimerase (E) domain on module 2 is probably involved in the formation of the D-isoleucine moiety. Modules 3 and 4 further load 2 successive L-prolines. Module 5 is then involved in the condensation of O-Me-L-tyrosine produced by the O-methyltransferase agiB and the N-methyl transferase (NMeT) domain on module 5 probably catalyzes the N-methylation to yield the N-Me-L-O-Me-tyrosine moiety. The A domain of module 5 loads preferentially O-Me-L-tyrosine, but it can also accept L-phenylalanine, which leads to the production of aspergillicin G. Module 6 then loads the last residue, L-isoleucine. The C-terminal thiolesterase (TE) domain probably cyclizes the peptide using the hydroxy group from threonine to form the cyclic depsipeptide. This Aspergillus flavus (strain ATCC 200026 / FGSC A1120 / IAM 13836 / NRRL 3357 / JCM 12722 / SRRC 167) protein is Nonribosomal peptide synthetase agiA.